Consider the following 221-residue polypeptide: Lactate racemization regulatory protein (221 aa).

The HTH crp-type domain maps to 139-213; the sequence is NGKKGAICAF…NHKFIIQDVS (75 aa). Positions 172–192 form a DNA-binding region, H-T-H motif; the sequence is NDDIAGFCGISSRSSVNRMLK.

In terms of assembly, multimerizes on DNA. Multimerization is required for transcription activation.

L-lactate acts as a positive effector on the binding and multimerization of LarR on DNA, while D-lactate antagonizes the positive effect of L-lactate. Functionally, positive transcriptional regulator that is absolutely required for the expression of lactate racemase (Lar) activity. Controls Lar expression by sensing the L-/D-lactate ration. Binds to a 16-bp palindromic sequence (Lar box motif) that is present in the larR-larA intergenic region, allowing transcription of the larABCDE operon. The sequence is that of Lactate racemization regulatory protein from Lactiplantibacillus plantarum (strain ATCC BAA-793 / NCIMB 8826 / WCFS1) (Lactobacillus plantarum).